The primary structure comprises 305 residues: Transcription factor bHLH18 (305 aa).

Positions 41 to 67 are disordered; sequence LKTTHISPNLHPFSSSNPPPPKHQPSS. Residues 44 to 56 show a composition bias toward polar residues; sequence THISPNLHPFSSS. A bHLH domain is found at 122–171; that stretch reads SNAQDHILAERKRREKLTQRFVALSALIPGLKKMDKASVLGDAIKHIKYL. The tract at residues 201–224 is disordered; the sequence is DENHQPSSSSSSDGNRNSSSSNLP. The segment covering 207-222 has biased composition (low complexity); the sequence is SSSSSSDGNRNSSSSN.

Homodimer. As to expression, expressed in roots.

It localises to the nucleus. In Arabidopsis thaliana (Mouse-ear cress), this protein is Transcription factor bHLH18 (BHLH18).